Here is a 249-residue protein sequence, read N- to C-terminus: MLQTLKTLTLIPARMASTRLPNKPLADICGKPMIVHVADRAAAAKLGRTVVATDSEEIFAIVTAHGHEAIMTREDHESGSDRIYEALMKVDPAGEFDAVVNVQGDLPTIDPDIIRRALLPLEDGPADIATLGVEIEEESEKTNPSVVKIVGSPLAGNSRLRALYFTRATAPYGEGPLYHHIGLYAYRRSALERFVKLGPSPLEKREKLEQLRALEAGMRIDVELVRTVPLGVDTQADLDRARILVAQGI.

This sequence belongs to the KdsB family.

It is found in the cytoplasm. It catalyses the reaction 3-deoxy-alpha-D-manno-oct-2-ulosonate + CTP = CMP-3-deoxy-beta-D-manno-octulosonate + diphosphate. Its pathway is nucleotide-sugar biosynthesis; CMP-3-deoxy-D-manno-octulosonate biosynthesis; CMP-3-deoxy-D-manno-octulosonate from 3-deoxy-D-manno-octulosonate and CTP: step 1/1. It functions in the pathway bacterial outer membrane biogenesis; lipopolysaccharide biosynthesis. Its function is as follows. Activates KDO (a required 8-carbon sugar) for incorporation into bacterial lipopolysaccharide in Gram-negative bacteria. The chain is 3-deoxy-manno-octulosonate cytidylyltransferase from Brucella anthropi (strain ATCC 49188 / DSM 6882 / CCUG 24695 / JCM 21032 / LMG 3331 / NBRC 15819 / NCTC 12168 / Alc 37) (Ochrobactrum anthropi).